A 113-amino-acid polypeptide reads, in one-letter code: MTNVCDLTDRKCKPCEGGVPPLEMEEAEKLLKQLEQGWQLADNKISRTFSFKNYYQTMAFVNAIAWVSHREDHHPDMMVGYDWCRVEYMTHAIGGLSENDFICAAKVDMLFKS.

This sequence belongs to the pterin-4-alpha-carbinolamine dehydratase family.

It carries out the reaction (4aS,6R)-4a-hydroxy-L-erythro-5,6,7,8-tetrahydrobiopterin = (6R)-L-erythro-6,7-dihydrobiopterin + H2O. The chain is Putative pterin-4-alpha-carbinolamine dehydratase from Nitrosomonas europaea (strain ATCC 19718 / CIP 103999 / KCTC 2705 / NBRC 14298).